Here is a 429-residue protein sequence, read N- to C-terminus: Ribosomal RNA small subunit methyltransferase B (429 aa).

S-adenosyl-L-methionine contacts are provided by residues 254–260 (CAAPGGK), Asp-277, Asp-303, and Asp-322. The active-site Nucleophile is Cys-375. A disordered region spans residues 397–419 (ALSETGTPDQPGQQNLPGGEEGD). The span at 400-412 (ETGTPDQPGQQNL) shows a compositional bias: polar residues.

The protein belongs to the class I-like SAM-binding methyltransferase superfamily. RsmB/NOP family.

The protein localises to the cytoplasm. It catalyses the reaction cytidine(967) in 16S rRNA + S-adenosyl-L-methionine = 5-methylcytidine(967) in 16S rRNA + S-adenosyl-L-homocysteine + H(+). Specifically methylates the cytosine at position 967 (m5C967) of 16S rRNA. This is Ribosomal RNA small subunit methyltransferase B from Salmonella paratyphi A (strain ATCC 9150 / SARB42).